The primary structure comprises 558 residues: Delta-1-pyrroline-5-carboxylate dehydrogenase, mitochondrial (558 aa).

NAD(+) is bound by residues Ser198, Lys223, and Gly276–Val280. The active-site Proton acceptor is Glu306. Catalysis depends on Cys340, which acts as the Nucleophile. Position 438 (Glu438) interacts with NAD(+).

The protein belongs to the aldehyde dehydrogenase family.

It is found in the mitochondrion matrix. It carries out the reaction L-glutamate 5-semialdehyde + NAD(+) + H2O = L-glutamate + NADH + 2 H(+). The protein operates within amino-acid degradation; L-proline degradation into L-glutamate; L-glutamate from L-proline: step 2/2. Functionally, irreversible conversion of delta-1-pyrroline-5-carboxylate (P5C), derived either from proline or ornithine, to glutamate. This is a necessary step in the pathway interconnecting the urea and tricarboxylic acid cycles. In Dictyostelium discoideum (Social amoeba), this protein is Delta-1-pyrroline-5-carboxylate dehydrogenase, mitochondrial.